Reading from the N-terminus, the 89-residue chain is uncharacterized protein (89 aa).

This is an uncharacterized protein from Vaccinia virus (strain Copenhagen) (VACV).